A 399-amino-acid chain; its full sequence is Argininosuccinate synthase (399 aa).

9–17 (AYSGGLDTS) contacts ATP. Tyr88 contacts L-citrulline. Position 118 (Gly118) interacts with ATP. Thr120, Asn124, and Asp125 together coordinate L-aspartate. Asn124 lines the L-citrulline pocket. L-citrulline-binding residues include Arg128, Ser176, Glu261, and Tyr273.

It belongs to the argininosuccinate synthase family. Type 1 subfamily. In terms of assembly, homotetramer.

It localises to the cytoplasm. It carries out the reaction L-citrulline + L-aspartate + ATP = 2-(N(omega)-L-arginino)succinate + AMP + diphosphate + H(+). It functions in the pathway amino-acid biosynthesis; L-arginine biosynthesis; L-arginine from L-ornithine and carbamoyl phosphate: step 2/3. In Mycobacterium leprae (strain TN), this protein is Argininosuccinate synthase.